A 331-amino-acid chain; its full sequence is MAAAETGRRPHIPVLLRPLLAAVAPVSGVWLDGTFGAGGYARGLLEAGADRVIGVDRDPLALEMAQDWAGAYGDRLRLVAGTFSQLDVHAGEPLDGVVLDLGVSSMQLDQADRGFSFQKDGPLDMRMSQQGESAADLVNEASEETLADILYHYGEERASRRIARAIVEARAAGPITRTLHLAEIVARCLPRPKPGQMHPATRSFQAIRIAVNAEFSELVEGLEAAERALKPGGRLAVVTFHSLEDRIVKRFLQLRSGGEGQGNRYAPETRAEAARFTLPLRRAISPDEAELADNPRARSARLRVGVRTDAPAGPVDPQVLGMPLIPKKGRR.

S-adenosyl-L-methionine is bound by residues 38 to 40 (GGY), Asp56, Phe83, Asp100, and Gln107. Residues 308–331 (TDAPAGPVDPQVLGMPLIPKKGRR) form a disordered region.

This sequence belongs to the methyltransferase superfamily. RsmH family.

The protein localises to the cytoplasm. It carries out the reaction cytidine(1402) in 16S rRNA + S-adenosyl-L-methionine = N(4)-methylcytidine(1402) in 16S rRNA + S-adenosyl-L-homocysteine + H(+). In terms of biological role, specifically methylates the N4 position of cytidine in position 1402 (C1402) of 16S rRNA. The chain is Ribosomal RNA small subunit methyltransferase H from Cereibacter sphaeroides (strain ATCC 17025 / ATH 2.4.3) (Rhodobacter sphaeroides).